The chain runs to 1488 residues: Chromosome partition protein MukB (1488 aa).

34-41 lines the ATP pocket; it reads GGNGAGKS. Coiled-coil stretches lie at residues 326-418, 444-472, and 509-602; these read LEAD…QYNQ, LDTF…QTAH, and RHLA…QRAP. The segment at 666-783 is flexible hinge; it reads PGGAEDQRLN…SLPIFGRAAR (118 aa). Coiled coils occupy residues 835–923, 977–1116, and 1209–1265; these read EAEI…AKLE, EMLS…AKAG, and VEAI…LQSV. Positions 1049–1074 are disordered; the sequence is ADSGAEERARQRRDELHAQLSNNRSR. Positions 1051–1065 are enriched in basic and acidic residues; it reads SGAEERARQRRDELH.

The protein belongs to the SMC family. MukB subfamily. In terms of assembly, homodimerization via its hinge domain. Binds to DNA via its C-terminal region. Interacts, and probably forms a ternary complex, with MukE and MukF via its C-terminal region. The complex formation is stimulated by calcium or magnesium. Interacts with tubulin-related protein FtsZ.

It is found in the cytoplasm. The protein resides in the nucleoid. Functionally, plays a central role in chromosome condensation, segregation and cell cycle progression. Functions as a homodimer, which is essential for chromosome partition. Involved in negative DNA supercoiling in vivo, and by this means organize and compact chromosomes. May achieve or facilitate chromosome segregation by condensation DNA from both sides of a centrally located replisome during cell division. This is Chromosome partition protein MukB from Salmonella schwarzengrund (strain CVM19633).